The sequence spans 607 residues: Nexilin (607 aa).

Over residues 1 to 14 (MNDVSQKAEIKEML) the composition is skewed to basic and acidic residues. 2 disordered regions span residues 1 to 143 (MNDV…EDKM) and 165 to 268 (ETEA…RRRI). Ser-16 carries the phosphoserine modification. Composition is skewed to basic and acidic residues over residues 40–85 (GKFD…RAEQ), 120–143 (KTKDPEDLDREEGNGRTNHEEDKM), 167–221 (EAKK…HMVN), and 228–268 (DRET…RRRI). Ser-172 carries the phosphoserine modification. Phosphoserine occurs at positions 281, 288, and 296. Thr-301 carries the phosphothreonine modification. 2 disordered regions span residues 419–444 (NFHEDDDVDVRPAKKSESPFTHKVNM) and 480–514 (AALQKKREDEEEEEGSIVNGSTTEDEEQTRSGAPW). Ser-495 and Ser-500 each carry phosphoserine. Thr-502 is subject to Phosphothreonine. The Ig-like domain maps to 513–601 (PWFKKPLRNT…GSAASTCILT (89 aa)).

Interacts with F-actin.

The protein localises to the cytoplasm. It localises to the cytoskeleton. The protein resides in the cell junction. It is found in the adherens junction. Its subcellular location is the myofibril. The protein localises to the sarcomere. It localises to the z line. Functionally, involved in regulating cell migration through association with the actin cytoskeleton. Has an essential role in the maintenance of Z line and sarcomere integrity. This chain is Nexilin, found in Mus musculus (Mouse).